Consider the following 401-residue polypeptide: Beta-ketoadipyl-CoA thiolase (401 aa).

Residue cysteine 90 is the Acyl-thioester intermediate of the active site. Active-site proton acceptor residues include histidine 357 and cysteine 387.

Belongs to the thiolase-like superfamily. Thiolase family.

It catalyses the reaction succinyl-CoA + acetyl-CoA = 3-oxoadipyl-CoA + CoA. It participates in aromatic compound metabolism; beta-ketoadipate pathway; acetyl-CoA and succinyl-CoA from 3-oxoadipate: step 2/2. Its function is as follows. Catalyzes thiolytic cleavage of beta-ketoadipyl-CoA to succinyl-CoA and acetyl-CoA. This chain is Beta-ketoadipyl-CoA thiolase (pcaF), found in Acinetobacter baylyi (strain ATCC 33305 / BD413 / ADP1).